An 83-amino-acid chain; its full sequence is Cytochrome b559 subunit alpha (83 aa).

The chain crosses the membrane as a helical span at residues 21-35 (VIHSITIPSLFIAGW). Heme is bound at residue histidine 23.

Belongs to the PsbE/PsbF family. As to quaternary structure, heterodimer of an alpha subunit and a beta subunit. PSII is composed of 1 copy each of membrane proteins PsbA, PsbB, PsbC, PsbD, PsbE, PsbF, PsbH, PsbI, PsbJ, PsbK, PsbL, PsbM, PsbT, PsbX, PsbY, PsbZ, Psb30/Ycf12, at least 3 peripheral proteins of the oxygen-evolving complex and a large number of cofactors. It forms dimeric complexes. Requires heme b as cofactor.

The protein resides in the plastid. It is found in the chloroplast thylakoid membrane. Functionally, this b-type cytochrome is tightly associated with the reaction center of photosystem II (PSII). PSII is a light-driven water:plastoquinone oxidoreductase that uses light energy to abstract electrons from H(2)O, generating O(2) and a proton gradient subsequently used for ATP formation. It consists of a core antenna complex that captures photons, and an electron transfer chain that converts photonic excitation into a charge separation. This is Cytochrome b559 subunit alpha from Panax ginseng (Korean ginseng).